Here is a 990-residue protein sequence, read N- to C-terminus: Aconitate hydratase 3, mitochondrial (990 aa).

A mitochondrion-targeting transit peptide spans 1–78 (MYLTASSSAS…PFRFTSQIRA (78 aa)). Ser91 is subject to Phosphoserine. Residues Gln182 and 301-303 (DSH) contribute to the substrate site. The [4Fe-4S] cluster site is built by Cys533, Cys599, and Cys602. Substrate contacts are provided by residues Arg632, Arg637, Arg795, and 876–877 (SR).

Belongs to the aconitase/IPM isomerase family. Monomer. Interacts with B'GAMMA in the cytosol. The cofactor is [4Fe-4S] cluster. Post-translationally, phosphorylated at Ser-91 in the cytoplasm; this phosphorylation requires the presence of B'GAMMA. In terms of tissue distribution, major aconitase isoenzyme in young seedlings. Expressed in roots, leaves, stems and flowers, and, at low levels, in seeds.

It is found in the mitochondrion. The protein resides in the cytoplasm. The enzyme catalyses citrate = D-threo-isocitrate. It participates in carbohydrate metabolism; tricarboxylic acid cycle; isocitrate from oxaloacetate: step 2/2. Functionally, catalyzes the isomerization of citrate to isocitrate via cis-aconitate. Contributes to oxidative stress tolerance. Modulates cytosolic citrate metabolism during lipid mobilization. Required during seedling growth. The sequence is that of Aconitate hydratase 3, mitochondrial from Arabidopsis thaliana (Mouse-ear cress).